The sequence spans 132 residues: Histone H2A.1 (132 aa).

The interval 1–21 (MSGGKGKAGTSEKASTSRSAK) is disordered. N-acetylserine is present on S2. N6-acetyllysine is present on residues K5 and K7. The residue at position 105 (Q105) is an N5-methylglutamine. The residue at position 129 (S129) is a Phosphoserine. Residues 129-130 (SQ) carry the [ST]-Q motif motif.

This sequence belongs to the histone H2A family. The nucleosome is a histone octamer containing two molecules each of H2A, H2B, H3 and H4 assembled in one H3-H4 heterotetramer and two H2A-H2B heterodimers. The octamer wraps approximately 147 bp of DNA. In terms of processing, phosphorylated to form H2AS128ph (gamma-H2A) in response to DNA double-strand breaks (DSBs) generated by exogenous genotoxic agents and by stalled replication forks. Phosphorylation is dependent on the DNA damage checkpoint kinases MEC1/ATR and TEL1/ATM, spreads on either side of a detected DSB site and may mark the surrounding chromatin for recruitment of proteins required for DNA damage signaling and repair. Gamma-H2A is removed from the DNA prior to the strand invasion-primer extension step of the repair process and subsequently dephosphorylated. Dephosphorylation is necessary for efficient recovery from the DNA damage checkpoint. Acetylated by ESA1 to form H2AK4ac and H2AK7ac.

It is found in the nucleus. It localises to the chromosome. In terms of biological role, core component of nucleosome which plays a central role in DNA double strand break (DSB) repair. Nucleosomes wrap and compact DNA into chromatin, limiting DNA accessibility to the cellular machineries which require DNA as a template. Histones thereby play a central role in transcription regulation, DNA repair, DNA replication and chromosomal stability. DNA accessibility is regulated via a complex set of post-translational modifications of histones, also called histone code, and nucleosome remodeling. The protein is Histone H2A.1 (HTA1) of Candida albicans (strain SC5314 / ATCC MYA-2876) (Yeast).